The primary structure comprises 557 residues: Urocanate hydratase (557 aa).

Residues 53 to 54, Gln131, 177 to 179, Glu197, Arg202, 243 to 244, 264 to 268, 274 to 275, and Tyr323 contribute to the NAD(+) site; these read GG, GMG, NA, QTSAH, and YL. The active site involves Cys411. Gly493 contributes to the NAD(+) binding site.

It belongs to the urocanase family. NAD(+) is required as a cofactor.

Its subcellular location is the cytoplasm. The catalysed reaction is 4-imidazolone-5-propanoate = trans-urocanate + H2O. It participates in amino-acid degradation; L-histidine degradation into L-glutamate; N-formimidoyl-L-glutamate from L-histidine: step 2/3. Functionally, catalyzes the conversion of urocanate to 4-imidazolone-5-propionate. The polypeptide is Urocanate hydratase (Pseudomonas putida (strain ATCC 700007 / DSM 6899 / JCM 31910 / BCRC 17059 / LMG 24140 / F1)).